We begin with the raw amino-acid sequence, 586 residues long: DNA-binding protein RFX8 (586 aa).

A DNA-binding region (RFX-type winged-helix) is located at residues 22–97 (VIQWLVDNFC…YHYDGICIKK (76 aa)).

The protein belongs to the RFX family.

The protein localises to the nucleus. May be a transcription factor. The sequence is that of DNA-binding protein RFX8 (RFX8) from Homo sapiens (Human).